The primary structure comprises 142 residues: MPFGEYPYTIDDKGRVVIPPAFREFVEDGMILTRGMEGCLYVFPLASWRRVEEQLEGLPITDAGSRAFVRFFYSGANKARLDNQSRVSVPQTLRAFAQLDGDVIVAGAPGRLELWNPERWAAAIQAVQQDPPNPELLANFVA.

SpoVT-AbrB domains are found at residues 5–47 and 76–119; these read EYPY…PLAS and ANKA…NPER.

Belongs to the MraZ family. Forms oligomers.

Its subcellular location is the cytoplasm. It is found in the nucleoid. The polypeptide is Transcriptional regulator MraZ (Deinococcus geothermalis (strain DSM 11300 / CIP 105573 / AG-3a)).